Reading from the N-terminus, the 277-residue chain is Undecaprenyl-diphosphatase (277 aa).

Helical transmembrane passes span 3–23 (IALL…EFLP), 44–64 (AKVF…LVYW), 82–102 (QFAL…LLFG), 109–129 (LFTP…ILWA), 188–208 (ATDF…VYSL), 218–238 (ADVP…WLCI), and 249–269 (SFIP…ATAW).

It belongs to the UppP family.

The protein resides in the cell inner membrane. It carries out the reaction di-trans,octa-cis-undecaprenyl diphosphate + H2O = di-trans,octa-cis-undecaprenyl phosphate + phosphate + H(+). In terms of biological role, catalyzes the dephosphorylation of undecaprenyl diphosphate (UPP). Confers resistance to bacitracin. This Polaromonas sp. (strain JS666 / ATCC BAA-500) protein is Undecaprenyl-diphosphatase.